A 173-amino-acid chain; its full sequence is Inorganic pyrophosphatase (173 aa).

Substrate contacts are provided by lysine 29, arginine 43, and tyrosine 55. 3 residues coordinate Mg(2+): aspartate 65, aspartate 70, and aspartate 102. Tyrosine 141 provides a ligand contact to substrate.

This sequence belongs to the PPase family. In terms of assembly, homohexamer. Mg(2+) is required as a cofactor.

It localises to the cytoplasm. The enzyme catalyses diphosphate + H2O = 2 phosphate + H(+). In terms of biological role, catalyzes the hydrolysis of inorganic pyrophosphate (PPi) forming two phosphate ions. The chain is Inorganic pyrophosphatase from Rickettsia conorii (strain ATCC VR-613 / Malish 7).